The chain runs to 369 residues: Flagellar P-ring protein (369 aa).

The N-terminal stretch at 1-23 (MRSLLRWMGVLLLCGLCAAPAQA) is a signal peptide.

This sequence belongs to the FlgI family. The basal body constitutes a major portion of the flagellar organelle and consists of four rings (L,P,S, and M) mounted on a central rod.

It is found in the periplasm. Its subcellular location is the bacterial flagellum basal body. Functionally, assembles around the rod to form the L-ring and probably protects the motor/basal body from shearing forces during rotation. This is Flagellar P-ring protein from Chromohalobacter salexigens (strain ATCC BAA-138 / DSM 3043 / CIP 106854 / NCIMB 13768 / 1H11).